Reading from the N-terminus, the 419-residue chain is MNNQKQQKPTLSGQRFKTRKRDEKERFDPTQFQDCIIQGLTETGTDLEAVAKFLDASGAKLDYRRYAETLFDILVAGGMLAPGGTLADDMMRTDVCVFAAQEDLETMQAFAQVFNKLIRRYKYLEKGFEDGVKKLLLFLKGFSESERNKLAMLTGVLLANGTLNASILNSLYNENLVKEGVSAAFAVKLFKSWINEKDINAVAASLRKVSMDNRLMELFPANKQSVEHFTKYFTEAGLKELSEYVRNQQTIGARKELQKELQEQMSRGDPFKDIILYVKEEMKKNNIPEPVVIGIVWSSVMSTVEWNKKEELVAEQAIKHLKQYSPLLAAFTTQGQSELTLLLKIQEYCYDNIHFMKAFQKIVVLFYKAEVLSEGPILKWYKDAHVAKGKSVFLEQMKKFVEWLKNAEEESESEAEEGD.

Position 1 is an N-acetylmethionine (methionine 1). A compositionally biased stretch (polar residues) spans 1–15 (MNNQKQQKPTLSGQR). Residues 1 to 26 (MNNQKQQKPTLSGQRFKTRKRDEKER) form a disordered region. Phosphoserine is present on serine 12. The W2 domain maps to 247 to 414 (NQQTIGARKE…KNAEEESESE (168 aa)). Lysine 368 is covalently cross-linked (Glycyl lysine isopeptide (Lys-Gly) (interchain with G-Cter in SUMO2)). Serine 411 and serine 413 each carry phosphoserine.

It belongs to the BZW family.

Functionally, translation initiation regulator which represses repeat-associated non-AUG (RAN) initiated translation probably by acting as a competitive inhibitor of eukaryotic translation initiation factor 5 (EIF5) function. Enhances histone H4 gene transcription but does not seem to bind DNA directly. This chain is eIF5-mimic protein 2 (BZW1), found in Pongo abelii (Sumatran orangutan).